We begin with the raw amino-acid sequence, 89 residues long: Small ribosomal subunit protein bS16 (89 aa).

It belongs to the bacterial ribosomal protein bS16 family.

The protein is Small ribosomal subunit protein bS16 of Chloroflexus aurantiacus (strain ATCC 29364 / DSM 637 / Y-400-fl).